The primary structure comprises 198 residues: Pyridoxal 5'-phosphate synthase subunit PdxT (198 aa).

Residue 49 to 51 coordinates L-glutamine; the sequence is GES. The active-site Nucleophile is the Cys-81. Residues Arg-113 and 141–142 each bind L-glutamine; that span reads IR. Catalysis depends on charge relay system residues His-177 and Glu-179.

It belongs to the glutaminase PdxT/SNO family. In the presence of PdxS, forms a dodecamer of heterodimers. Only shows activity in the heterodimer.

The catalysed reaction is aldehydo-D-ribose 5-phosphate + D-glyceraldehyde 3-phosphate + L-glutamine = pyridoxal 5'-phosphate + L-glutamate + phosphate + 3 H2O + H(+). It catalyses the reaction L-glutamine + H2O = L-glutamate + NH4(+). The protein operates within cofactor biosynthesis; pyridoxal 5'-phosphate biosynthesis. Catalyzes the hydrolysis of glutamine to glutamate and ammonia as part of the biosynthesis of pyridoxal 5'-phosphate. The resulting ammonia molecule is channeled to the active site of PdxS. The protein is Pyridoxal 5'-phosphate synthase subunit PdxT of Mycobacterium tuberculosis (strain ATCC 25177 / H37Ra).